Consider the following 209-residue polypeptide: Uracil phosphoribosyltransferase (209 aa).

Residues Arg-79, Arg-104, and 131-139 (DPMLATGGS) contribute to the 5-phospho-alpha-D-ribose 1-diphosphate site. Residues Ile-194 and 199 to 201 (GDA) each bind uracil. Asp-200 is a binding site for 5-phospho-alpha-D-ribose 1-diphosphate.

This sequence belongs to the UPRTase family. Mg(2+) serves as cofactor.

It carries out the reaction UMP + diphosphate = 5-phospho-alpha-D-ribose 1-diphosphate + uracil. It functions in the pathway pyrimidine metabolism; UMP biosynthesis via salvage pathway; UMP from uracil: step 1/1. Its activity is regulated as follows. Allosterically activated by GTP. Catalyzes the conversion of uracil and 5-phospho-alpha-D-ribose 1-diphosphate (PRPP) to UMP and diphosphate. In Lysinibacillus sphaericus (strain C3-41), this protein is Uracil phosphoribosyltransferase.